Reading from the N-terminus, the 581-residue chain is Bifunctional lycopene cyclase/phytoene synthase (581 aa).

A lycopene beta-cyclase region spans residues 1–243; the sequence is MGFDYALVHL…IVFGQLAFDN (243 aa). 7 helical membrane-spanning segments follow: residues 3–23, 35–55, 65–85, 120–140, 152–172, 173–193, and 221–241; these read FDYA…LTLL, KVAF…SYLI, HVII…FFVV, LKRL…WFCV, ILIW…QFII, GLPF…LWIV, and IEEA…QLAF. The segment at 250–581 is phytoene synthase; it reads AFPHLFPDPS…RVLVAWRTLN (332 aa).

This sequence in the N-terminal section; belongs to the lycopene beta-cyclase family. It in the C-terminal section; belongs to the phytoene/squalene synthase family.

The protein resides in the membrane. It carries out the reaction all-trans-lycopene = gamma-carotene. The catalysed reaction is gamma-carotene = all-trans-beta-carotene. The enzyme catalyses 2 (2E,6E,10E)-geranylgeranyl diphosphate = 15-cis-phytoene + 2 diphosphate. It participates in carotenoid biosynthesis; beta-carotene biosynthesis. The protein operates within carotenoid biosynthesis; phytoene biosynthesis; all-trans-phytoene from geranylgeranyl diphosphate: step 1/1. In terms of biological role, bifunctional enzyme that catalyzes the reactions from geranylgeranyl diphosphate to phytoene (phytoene synthase) and lycopene to beta-carotene via the intermediate gamma-carotene (lycopene cyclase). The sequence is that of Bifunctional lycopene cyclase/phytoene synthase from Leptosphaeria maculans (strain JN3 / isolate v23.1.3 / race Av1-4-5-6-7-8) (Blackleg fungus).